The sequence spans 144 residues: Ribosome maturation factor RimP (144 aa).

The protein belongs to the RimP family.

It is found in the cytoplasm. In terms of biological role, required for maturation of 30S ribosomal subunits. The polypeptide is Ribosome maturation factor RimP (Methylobacillus flagellatus (strain ATCC 51484 / DSM 6875 / VKM B-1610 / KT)).